The chain runs to 150 residues: Transcription antitermination protein NusB (150 aa).

It belongs to the NusB family.

Functionally, involved in transcription antitermination. Required for transcription of ribosomal RNA (rRNA) genes. Binds specifically to the boxA antiterminator sequence of the ribosomal RNA (rrn) operons. The polypeptide is Transcription antitermination protein NusB (Streptococcus equi subsp. zooepidemicus (strain H70)).